A 116-amino-acid chain; its full sequence is Aspartate 1-decarboxylase (116 aa).

The active-site Schiff-base intermediate with substrate; via pyruvic acid is the Ser-25. Residue Ser-25 is modified to Pyruvic acid (Ser). Thr-57 provides a ligand contact to substrate. The Proton donor role is filled by Tyr-58. Gly-73–Ala-75 is a substrate binding site.

Belongs to the PanD family. Heterooctamer of four alpha and four beta subunits. It depends on pyruvate as a cofactor. Post-translationally, is synthesized initially as an inactive proenzyme, which is activated by self-cleavage at a specific serine bond to produce a beta-subunit with a hydroxyl group at its C-terminus and an alpha-subunit with a pyruvoyl group at its N-terminus.

Its subcellular location is the cytoplasm. It carries out the reaction L-aspartate + H(+) = beta-alanine + CO2. The protein operates within cofactor biosynthesis; (R)-pantothenate biosynthesis; beta-alanine from L-aspartate: step 1/1. Functionally, catalyzes the pyruvoyl-dependent decarboxylation of aspartate to produce beta-alanine. The polypeptide is Aspartate 1-decarboxylase (Leptospira borgpetersenii serovar Hardjo-bovis (strain JB197)).